Reading from the N-terminus, the 396-residue chain is S-adenosylmethionine synthase (396 aa).

ATP is bound at residue His16. Mg(2+) is bound at residue Asp18. Glu44 contacts K(+). Residues Glu57 and Gln100 each contribute to the L-methionine site. A flexible loop region spans residues 100–110 (QSVDIAQGVDR). ATP is bound by residues 165–167 (DAK), Asp240, 246–247 (RK), Ala263, and Lys267. Asp240 lines the L-methionine pocket. Position 271 (Lys271) interacts with L-methionine.

This sequence belongs to the AdoMet synthase family. As to quaternary structure, homotetramer; dimer of dimers. Mg(2+) serves as cofactor. The cofactor is K(+).

The protein localises to the cytoplasm. The catalysed reaction is L-methionine + ATP + H2O = S-adenosyl-L-methionine + phosphate + diphosphate. The protein operates within amino-acid biosynthesis; S-adenosyl-L-methionine biosynthesis; S-adenosyl-L-methionine from L-methionine: step 1/1. Its function is as follows. Catalyzes the formation of S-adenosylmethionine (AdoMet) from methionine and ATP. The overall synthetic reaction is composed of two sequential steps, AdoMet formation and the subsequent tripolyphosphate hydrolysis which occurs prior to release of AdoMet from the enzyme. This Pseudomonas syringae pv. syringae (strain B728a) protein is S-adenosylmethionine synthase.